Here is a 459-residue protein sequence, read N- to C-terminus: Alcohol acyl transferase 1 allele GSd (459 aa).

Active-site proton acceptor residues include His164 and Asn385.

Belongs to the plant acyltransferase family. Expressed at very low levels in the cortex and skin of ripe fruit.

Its function is as follows. Involved in the biosynthesis of volatile esters which confer ripe apple fruit flavor. Alcohol acyl transferase that can use a wide range of alcohols as substrate to produce esters. This chain is Alcohol acyl transferase 1 allele GSd, found in Malus domestica (Apple).